Here is a 363-residue protein sequence, read N- to C-terminus: Probable cinnamyl alcohol dehydrogenase 6 (363 aa).

A Zn(2+)-binding site is contributed by C51. An NADP(+)-binding site is contributed by S53. The Zn(2+) site is built by H73, E74, C104, C107, C110, C118, and C167. NADP(+) contacts are provided by residues S171, 192–197 (GLGGLG), 215–220 (SSTTGK), T255, G279, and 302–304 (SGI).

Belongs to the zinc-containing alcohol dehydrogenase family. As to quaternary structure, homodimer. Zn(2+) is required as a cofactor. As to expression, expressed in the primary and lateral roots, and root caps. Expressed in the hypocotyl, cotyledon veins and hydathodes. In stems, expressed in the vascular cambium, interfascicular cambium and developing xylem. Expressed in the style, anthers, stamen filaments, vascular tissues of sepals, stigmatic regions in flowers, and abscission and style regions of siliques.

The enzyme catalyses (E)-cinnamyl alcohol + NADP(+) = (E)-cinnamaldehyde + NADPH + H(+). It catalyses the reaction (E)-coniferol + NADP(+) = (E)-coniferaldehyde + NADPH + H(+). It carries out the reaction (E)-sinapyl alcohol + NADP(+) = (E)-sinapaldehyde + NADPH + H(+). The catalysed reaction is (E)-4-coumaroyl alcohol + NADP(+) = (E)-4-coumaraldehyde + NADPH + H(+). The enzyme catalyses (E)-caffeyl alcohol + NADP(+) = (E)-caffeyl aldehyde + NADPH + H(+). It functions in the pathway aromatic compound metabolism; phenylpropanoid biosynthesis. Functionally, involved in lignin biosynthesis. Catalyzes the final step specific for the production of lignin monomers. Catalyzes the NADPH-dependent reduction of coniferaldehyde, 5-hydroxyconiferaldehyde, sinapaldehyde, 4-coumaraldehyde and caffeyl aldehyde to their respective alcohols. In Arabidopsis thaliana (Mouse-ear cress), this protein is Probable cinnamyl alcohol dehydrogenase 6 (CAD6).